The following is a 392-amino-acid chain: Putative glutamate--cysteine ligase 2 (392 aa).

The tract at residues 1-21 (MMPVSGWRAVSSAPASSSAGR) is disordered. Positions 9-19 (AVSSAPASSSA) are enriched in low complexity.

The protein belongs to the glutamate--cysteine ligase type 2 family. YbdK subfamily.

It catalyses the reaction L-cysteine + L-glutamate + ATP = gamma-L-glutamyl-L-cysteine + ADP + phosphate + H(+). Functionally, ATP-dependent carboxylate-amine ligase which exhibits weak glutamate--cysteine ligase activity. The chain is Putative glutamate--cysteine ligase 2 from Mycobacterium ulcerans (strain Agy99).